Here is a 278-residue protein sequence, read N- to C-terminus: MKIIILLGLIGATSSAPLITQRLLSASNSHELLLNLNNGQLLPLQFQSAFNSWIPPFPGLLQQQQQQAQVSGHPQFPLSTLESFAGLFPNQIPFSRQVGFAQGGQAGQPDFSQQQTPSQTQQASPMSYVVPVKVPQDQTQMFQYYPVYMLLPWEQPQQTVTSSPQQTGQQLYEEQIPFYNQFGFVPQQAEPGVPGGQQHLVLDSFVGTAPETPGMPAVEGPLYPQKEPIGFKQDNVGVSTPSTSPKPDTGNFFTSEINPTIAPLLPEQKVNADSLREP.

The signal sequence occupies residues 1–15 (MKIIILLGLIGATSS). The tract at residues 103–124 (GGQAGQPDFSQQQTPSQTQQAS) is disordered. The span at 107-124 (GQPDFSQQQTPSQTQQAS) shows a compositional bias: low complexity. 2 O-linked (GalNAc...) threonine glycosylation sites follow: threonine 116 and threonine 120. Residues 126 to 128 (MSY) are interaction with ARHGEF5. A disordered region spans residues 230–278 (GFKQDNVGVSTPSTSPKPDTGNFFTSEINPTIAPLLPEQKVNADSLREP). The segment covering 236–258 (VGVSTPSTSPKPDTGNFFTSEIN) has biased composition (polar residues). O-linked (GalNAc...) threonine glycans are attached at residues threonine 240, threonine 243, threonine 249, and threonine 254.

This sequence belongs to the ODAM family. As to quaternary structure, interacts (via C-terminus) with ARHGEF5. In terms of processing, O-glycosylated. As to expression, highly expressed in tooth-associated epithelia. In tooth, it is only detected in the ameloblast layer of the enamel organ, starting at post-secretory transition and extending throughout the maturation stage. Also detected in epithelial cells of the gingiva which bind it to the tooth surface (junctional epithelium) (at protein level). Predominantly expressed in mandible, but also expressed at weak level in nasal and salivary glands, and at much lower level in epididymis.

It localises to the secreted. The protein localises to the cytoplasm. It is found in the nucleus. Its function is as follows. Tooth-associated epithelia protein that probably plays a role in odontogenesis, the complex process that results in the initiation and generation of the tooth. May be incorporated in the enamel matrix at the end of mineralization process. Involved in the induction of RHOA activity via interaction with ARHGEF and expression of downstream factors such as ROCK. Plays a role in attachment of the junctional epithelium to the tooth surface. In Rattus norvegicus (Rat), this protein is Odontogenic ameloblast-associated protein (Odam).